A 169-amino-acid chain; its full sequence is 16S rRNA aminocarboxypropyltransferase (169 aa).

Residues Thr-17, Leu-67, Leu-90, and Thr-109 each contribute to the S-adenosyl-L-methionine site.

It belongs to the TDD superfamily. TSR3 family.

It localises to the cytoplasm. It catalyses the reaction an N(1)-methylpseudouridine in rRNA + S-adenosyl-L-methionine = N(1)-methyl-N(3)-[(3S)-3-amino-3-carboxypropyl]pseudouridine in rRNA + S-methyl-5'-thioadenosine + H(+). Its function is as follows. Aminocarboxypropyltransferase that catalyzes the aminocarboxypropyl transfer on pseudouridine corresponding to position 914 in M.jannaschii 16S rRNA. It constitutes the last step in biosynthesis of the hypermodified N1-methyl-N3-(3-amino-3-carboxypropyl) pseudouridine (m1acp3-Psi). This is 16S rRNA aminocarboxypropyltransferase from Methanothermobacter thermautotrophicus (strain ATCC 29096 / DSM 1053 / JCM 10044 / NBRC 100330 / Delta H) (Methanobacterium thermoautotrophicum).